The chain runs to 132 residues: Small ribosomal subunit protein uS8 (132 aa).

It belongs to the universal ribosomal protein uS8 family. As to quaternary structure, part of the 30S ribosomal subunit. Contacts proteins S5 and S12.

Its function is as follows. One of the primary rRNA binding proteins, it binds directly to 16S rRNA central domain where it helps coordinate assembly of the platform of the 30S subunit. The protein is Small ribosomal subunit protein uS8 of Streptococcus agalactiae serotype V (strain ATCC BAA-611 / 2603 V/R).